The following is a 56-amino-acid chain: Conotoxin Cal6.41a (56 aa).

An N-terminal signal peptide occupies residues Met1–Thr23. Cystine bridges form between Cys27–Cys41, Cys33–Cys50, and Cys40–Cys54.

In terms of tissue distribution, expressed by the venom duct.

It is found in the secreted. Probable neurotoxin. The polypeptide is Conotoxin Cal6.41a (Californiconus californicus (California cone)).